The sequence spans 159 residues: Trafficking protein particle complex subunit 6A (159 aa).

Phosphoserine is present on Ser-33.

This sequence belongs to the TRAPP small subunits family. BET3 subfamily. Part of the multisubunit transport protein particle (TRAPP) complex. Heterodimer with TRAPPC3. The heterodimer TRAPPC3-TRAPPC6A interacts with TRAPPC2L. Interacts with TRAPPC2L.

It localises to the golgi apparatus. Its subcellular location is the cis-Golgi network. The protein localises to the endoplasmic reticulum. Its function is as follows. May play a role in vesicular transport during the biogenesis of melanosomes. In Bos taurus (Bovine), this protein is Trafficking protein particle complex subunit 6A.